A 377-amino-acid polypeptide reads, in one-letter code: RCC1 domain-containing protein 1 (377 aa).

An interaction with KDM8 region spans residues 1-172; it reads MAEKRHGAWF…VRQLELGAEH (172 aa). One copy of the RCC1 1 repeat lies at 6-57; sequence HGAWFGFGFCGFGQALGSGNSHHSVYSPEPLHASDDICQVSAGWSYTALVTR. Arg-144 bears the (3R)-3-hydroxyarginine mark. RCC1 repeat units lie at residues 179-230, 232-289, and 319-372; these read AGQV…CLSE, GDIY…IAIQ, and TGEL…VYAM.

In terms of assembly, found in a complex with KDM8. Interacts (via N-terminus) with KDM8 (via N-terminus). In terms of processing, specifically hydroxylated (with R stereochemistry) at C-3 of ARG-141 by KDM8.

The protein resides in the chromosome. In terms of biological role, plays a role in transcriptional repression of satellite repeats, possibly by regulating H3K36 methylation levels in centromeric regions together with KDM8. Possibly together with KDM8, is involved in proper mitotic spindle organization and chromosome segregation. Plays a role in regulating alpha-tubulin deacetylation and cytoskeletal microtubule stability, thereby promoting cell migration and TGF-beta-induced epithelial to mesenchymal transition (EMT), potentially through the inhibition of KDM8. The protein is RCC1 domain-containing protein 1 (Rccd1) of Mus musculus (Mouse).